A 126-amino-acid chain; its full sequence is Histone H2B.5 (126 aa).

Residues 1-27 (MAPKAEKKPSEKAPKADKKITKEGGSE) show a composition bias toward basic and acidic residues. A disordered region spans residues 1–34 (MAPKAEKKPSEKAPKADKKITKEGGSERKKKTKK). Residue Ala2 is modified to N,N,N-trimethylalanine; alternate. Ala2 carries the post-translational modification N,N-dimethylalanine; alternate. Ala2 carries the post-translational modification N-methylalanine; alternate. Lys4 bears the N6-methyllysine mark. An N6-acetyllysine mark is found at Lys7, Lys12, Lys18, and Lys19. Lys122 is covalently cross-linked (Glycyl lysine isopeptide (Lys-Gly) (interchain with G-Cter in ubiquitin)).

The protein belongs to the histone H2B family. In terms of assembly, the nucleosome is a histone octamer containing two molecules each of H2A, H2B, H3 and H4 assembled in one H3-H4 heterotetramer and two H2A-H2B heterodimers. The octamer wraps approximately 147 bp of DNA. In terms of processing, can be acetylated to form H2BK6ac, H2BK33ac and H2BK34ac. Post-translationally, monoubiquitinated by BRE1 to form H2BK143ub1 and deubiquitinated by UBP26. Required for heterochromatic histone H3 di- and trimethylation at H3K4me. May give a specific tag for epigenetic transcriptional activation.

Its subcellular location is the nucleus. The protein localises to the chromosome. Its function is as follows. Core component of nucleosome. Nucleosomes wrap and compact DNA into chromatin, limiting DNA accessibility to the cellular machineries which require DNA as a template. Histones thereby play a central role in transcription regulation, DNA repair, DNA replication and chromosomal stability. DNA accessibility is regulated via a complex set of post-translational modifications of histones, also called histone code, and nucleosome remodeling. The polypeptide is Histone H2B.5 (Arabidopsis thaliana (Mouse-ear cress)).